We begin with the raw amino-acid sequence, 217 residues long: FGFR1 oncogene partner 2 homolog (217 aa).

2 coiled-coil regions span residues 6 to 106 (TIEK…MSKY) and 163 to 188 (KEQE…TRES). A disordered region spans residues 194–217 (KEDASESTSLSGLVTSSDLSLRKS). Residues 199-217 (ESTSLSGLVTSSDLSLRKS) show a composition bias toward polar residues.

It belongs to the SIKE family.

It is found in the cytoplasm. The protein is FGFR1 oncogene partner 2 homolog (FGFR1OP2) of Gallus gallus (Chicken).